Reading from the N-terminus, the 1123-residue chain is Translation initiation factor IF-2 (1123 aa).

Disordered regions lie at residues 52–452 and 480–512; these read LLKA…KVHI and LARP…RQRQ. Low complexity-rich tracts occupy residues 54–73, 94–113, and 121–133; these read KAGS…PGKA, KPAA…AKSP, and AAPS…KASA. Residues 170–187 show a composition bias toward pro residues; that stretch reads PPSPPARPVPQQPSPPSA. Over residues 193–206 the composition is skewed to low complexity; the sequence is APIRRAAPNDAPRP. Composition is skewed to pro residues over residues 207-217 and 258-268; these read ANAPPSRPQPK and SPRPAVSPRPS. Low complexity predominate over residues 285–304; that stretch reads RPGAPTRPGTGAGRPSRPGG. Positions 320–339 are enriched in gly residues; that stretch reads GNRGEGGRPPGGARPAGGGN. Positions 388–403 are enriched in pro residues; the sequence is ATPPVSRPTATPPSPA. Gly residues predominate over residues 412–422; sequence FRPGAGPGGQR. The segment covering 425–439 has biased composition (basic and acidic residues); it reads GRPDWDDSAKLDALR. Low complexity predominate over residues 486–499; that stretch reads PKSQQKAAPKPVAA. The span at 500-512 shows a compositional bias: basic residues; the sequence is MRKRRKETTRQRQ. The region spanning 615 to 787 is the tr-type G domain; the sequence is RRPPVVTVMG…LLLVTEVEDL (173 aa). The interval 624 to 631 is G1; it reads GHVDHGKT. 624–631 provides a ligand contact to GTP; sequence GHVDHGKT. The tract at residues 649 to 653 is G2; it reads GITQH. Positions 674–677 are G3; the sequence is DTPG. Residues 674 to 678 and 728 to 731 contribute to the GTP site; these read DTPGH and NKID. The segment at 728–731 is G4; sequence NKID. Residues 764-766 are G5; sequence SAI.

This sequence belongs to the TRAFAC class translation factor GTPase superfamily. Classic translation factor GTPase family. IF-2 subfamily.

The protein localises to the cytoplasm. Its function is as follows. One of the essential components for the initiation of protein synthesis. Protects formylmethionyl-tRNA from spontaneous hydrolysis and promotes its binding to the 30S ribosomal subunits. Also involved in the hydrolysis of GTP during the formation of the 70S ribosomal complex. In Synechococcus sp. (strain WH7803), this protein is Translation initiation factor IF-2.